Consider the following 3960-residue polypeptide: Replicase polyprotein 1ab (3960 aa).

The C4-type; atypical zinc-finger motif lies at 8–28 (CTCTPNARVFMAEGQVYCTRC). Residues 69-180 (ECSPAGACWL…EDFCPFECAM (112 aa)) form the Peptidase C31 domain. Residues 69–182 (ECSPAGACWL…FCPFECAMAT (114 aa)) are PCP1-alpha. Residues C76 and H146 each act as for Nsp1-alpha papain-like cysteine proteinase activity in the active site. The tract at residues 199–200 (VS) is important for host EIF2AK2 inhibition. Residues 263–382 (DTVPEGNCWW…IFRFGSHKWY (120 aa)) are PCP1-beta. The region spanning 263–383 (DTVPEGNCWW…FRFGSHKWYG (121 aa)) is the Peptidase C32 domain. Active-site for Nsp1-beta papain-like cysteine proteinase activity residues include C270 and H339. Positions 426 to 513 (LKHYSPPAEG…GEHWTVTVTP (88 aa)) are OTU-like. Residues 428-535 (HYSPPAEGNC…QGCCGHKGGL (108 aa)) enclose the Peptidase C33 domain. Catalysis depends on for Nsp2 cysteine proteinase activity residues C437 and H506. 3 disordered regions span residues 809 to 882 (RWTP…ATPS), 899 to 979 (TPLS…GVLG), and 1156 to 1213 (PLAF…GGGP). The span at 810–819 (WTPPPPPPKV) shows a compositional bias: pro residues. 8 helical membrane-spanning segments follow: residues 1266–1286 (LCLF…LGVF), 1296–1316 (GVFG…SDPV), 1345–1365 (SLVV…LGGA), 1368–1388 (IWHF…GAYV), 1583–1603 (LMAA…GIYV), 1650–1670 (ALVA…FVSI), 1685–1705 (CVLL…LCVF), and 1719–1739 (ILWL…LAMV). Positions 1266–1388 (LCLFLCYSYP…ADCILAGAYV (123 aa)) are HD1. The tract at residues 1583–1745 (LMAALHVACS…LAMVLLVSLW (163 aa)) is HD2. In terms of domain architecture, Peptidase S32 spans 1810 to 2013 (GAFRTRKPSL…ALLAAKPELE (204 aa)). Active-site charge relay system; for 3C-like serine proteinase activity residues include H1848, D1873, and S1927. A run of 5 helical transmembrane segments spans residues 2012–2032 (LEGG…WRMM), 2060–2080 (FSFG…VLMI), 2092–2112 (WSLA…LAAT), 2137–2157 (SPVP…LYLF), and 2164–2184 (HILV…FAEG). The tract at residues 2036-2157 (WTPLVAVSFF…HLLAIILYLF (122 aa)) is HD3. Residues 2329 to 2358 (PTPTPPPAPVPIPLPPKVLENGPNAWGDED) form a disordered region. A compositionally biased stretch (pro residues) spans 2330–2344 (TPTPPPAPVPIPLPP). The NiRAN domain maps to 2488–2650 (IIDKLQGLTK…LPYKLYPVRG (163 aa)). In terms of domain architecture, RdRp catalytic spans 2889–3023 (GRCLEADLAS…YAESPTMPNY (135 aa)). The 64-residue stretch at 3144–3207 (GKKSRVCGYC…SPVGKGTSPL (64 aa)) folds into the AV ZBD domain. C3150, C3153, C3163, C3168, H3171, H3173, H3175, H3177, C3184, H3186, C3193, and C3196 together coordinate Zn(2+). A (+)RNA virus helicase ATP-binding domain is found at 3264–3416 (ASTALLPTCK…VFDIMPQTQL (153 aa)). ATP is bound at residue 3292 to 3299 (GPPGAGKT). A (+)RNA virus helicase C-terminal domain is found at 3417-3545 (KTIWRFGQNI…AVHCDGQLIV (129 aa)). One can recognise an AV-Nsp11N/CoV-Nsp15M domain in the interval 3584 to 3680 (EGSSSPLPKV…LTKFVKGGAQ (97 aa)). Residues 3682-3804 (LPETVFSTGR…MVWKDKTAYF (123 aa)) enclose the NendoU domain. Catalysis depends on residues H3713, H3728, and K3757.

The protein belongs to the arteriviridae polyprotein family. Nsp1-alpha papain-like: Interacts with host RNF31. In terms of assembly, interacts with host EIF2AK2; this interaction occurs in host stress granules and leads to EIF2AK2 inhibition. Interacts with host G3BP1; this interaction probably plays a role in Nsp1-beta-mediated inhibition of host EIF2AK2. As to quaternary structure, interacts with host DDX18; this interaction redistributes host DDX18 to the cytoplasm. Interacts with host IFITM1. In terms of assembly, interacts with host DDX5. As to quaternary structure, interacts with host OTULIN. Interacts with host LGALS3. Specific enzymatic cleavages in vivo by its own proteases yield mature proteins. Nsp1 is autocleaved into two subunits, Nsp1-alpha and Nsp1-beta. There are two alternative pathways for processing. Either nsp4-5 is cleaved, which represents the major pathway or the nsp5-6 and nsp6-7 are processed, which represents the minor pathway. The major pathway occurs when nsp2 acts as a cofactor for nsp4.

It is found in the host nucleus. Its subcellular location is the host cytoplasm. The protein resides in the host membrane. The protein localises to the host endoplasmic reticulum. It localises to the host perinuclear region. The catalysed reaction is RNA(n) + a ribonucleoside 5'-triphosphate = RNA(n+1) + diphosphate. The enzyme catalyses ATP + H2O = ADP + phosphate + H(+). It carries out the reaction Thiol-dependent hydrolysis of ester, thioester, amide, peptide and isopeptide bonds formed by the C-terminal Gly of ubiquitin (a 76-residue protein attached to proteins as an intracellular targeting signal).. It catalyses the reaction uridylyl-uridylyl-ribonucleotide-RNA = a 3'-end uridylyl-2',3'-cyclophospho-uridine-RNA + a 5'-end dephospho-ribonucleoside-RNA. Functionally, contains the activities necessary for the transcription of negative stranded RNA, leader RNA, subgenomic mRNAs and progeny virion RNA as well as proteinases responsible for the cleavage of the polyprotein into functional products. In terms of biological role, inhibits host IFN-beta production. Plays a role in the degradation of the host transcriptional activator CREBBP protein. The degradation of host CREBBP which is a key component of the IFN enhanceosome is likely responsible for the inhibition of interferon mediated by Nsp1-alpha. Also participates in the inhibition of host NF-kappa-B activation by counteracting LUBAC-dependent induction of NF-kappa-B. Reduces host NEMO ubiquitination by blocking the interaction between the two LUBAC complex components RNF31 and SHARPIN. Plays a role in blocking host mRNA nuclear export to the cytoplasm and subversion of host protein synthesis. Additionally, inhibits the interferon-activated JAK/STAT signal transduction by mediating the ubiquitination and subsequent proteasomal degradation of host KPNA1. Repurposes the host antiviral stress granules into a proviral platform to counteract the EIF2AK2/PKR restriction, thereby regulating the host inflammatory response. Its function is as follows. Multifunctional protein that acts as a viral protease and as a viral antagonist of host immune response. Cleaves the nsp2/nsp3 site in the viral polyprotein. Displays deubiquitinating activity that cleaves both ubiquitinated and ISGylated products and therefore inhibits ubiquitin and ISG15-dependent host innate immunity. Also deubiquinates host NFKBIA, thereby interfering with NFKBIA degradation and impairing subsequent NF-kappa-B activation. Functionally, plays a role in the inhibition of the immune response by interacting with host IFITM1. This interaction leads to the proteasomal degradation of the IFN-induced antiviral protein IFITM1. In terms of biological role, cleaves the majority of cleavage sites present in the C-terminus of the polyprotein. Triggers host apoptosis through caspase-3, -8, and -9 activations. Subverts host innate immune responses through its protease activity. Targets the NF-kappa-B essential modulator NEMO and mediates its cleavage. Blocks host interferon beta induction and downstream signaling by cleaving mitochondrial MAVS, dislodging it from the mitochondria. Impairs host defense by cleaving host mRNA-decapping enzyme DCP1A to attenuate its antiviral activity. Plays a role in the initial induction of autophagosomes from host endoplasmic reticulum. Its function is as follows. Plays a role in the inhibition of host STAT3 signaling pathway by inducing the degradation of STAT3. Functionally, responsible for replication and transcription of the viral RNA genome. In terms of biological role, displays RNA and DNA duplex-unwinding activities with 5' to 3' polarity. Plays a role in viral transcription/replication and prevents the simultaneous activation of host cell dsRNA sensors, such as MDA5/IFIH1, OAS, PKR and NLRP3 inflammasome. Acts by degrading the 5'-polyuridines generated during replication of the poly(A) region of viral genomic and subgenomic RNAs. Catalyzes a two-step reaction in which a 2'3'-cyclic phosphate (2'3'-cP) is first generated by 2'-O transesterification, which is then hydrolyzed to a 3'-phosphate (3'-P). If not degraded, poly(U) RNA would hybridize with poly(A) RNA tails and activate host dsRNA sensors. Also plays a role in the inhibition of host type I interferon production by recruiting host OTULIN to promote removal of linear ubiquitination targeting host NEMO. The chain is Replicase polyprotein 1ab (rep) from Porcine reproductive and respiratory syndrome virus (strain VR-2332) (PRRSV).